A 124-amino-acid polypeptide reads, in one-letter code: Histone H2B (124 aa).

The disordered stretch occupies residues 1–33; that stretch reads MPEPAKSAPKKGSKKAVTKTAGKGGKKRKRSRK. An N6-acetyllysine mark is found at lysine 6 and lysine 11. Residues 8 to 17 show a composition bias toward basic residues; that stretch reads APKKGSKKAV. A Phosphoserine modification is found at serine 13. Lysine 14 and lysine 19 each carry N6-acetyllysine. Serine 111 carries an O-linked (GlcNAc) serine glycan. A Glycyl lysine isopeptide (Lys-Gly) (interchain with G-Cter in ubiquitin) cross-link involves residue lysine 119.

The protein belongs to the histone H2B family. The nucleosome is a histone octamer containing two molecules each of H2A, H2B, H3 and H4 assembled in one H3-H4 heterotetramer and two H2A-H2B heterodimers. The octamer wraps approximately 147 bp of DNA. Post-translationally, monoubiquitination of Lys-119 by BRE1 gives a specific tag for epigenetic transcriptional activation and is also prerequisite for histone H3 'Lys-4' and 'Lys-79' methylation. In terms of processing, phosphorylated during apoptosis; which facilitates apoptotic chromatin condensation. GlcNAcylation at Ser-111 promotes monoubiquitination of Lys-119. It fluctuates in response to extracellular glucose, and associates with transcribed genes.

Its subcellular location is the nucleus. It localises to the chromosome. Its function is as follows. Core component of nucleosome. Nucleosomes wrap and compact DNA into chromatin, limiting DNA accessibility to the cellular machineries which require DNA as a template. Histones thereby play a central role in transcription regulation, DNA repair, DNA replication and chromosomal stability. DNA accessibility is regulated via a complex set of post-translational modifications of histones, also called histone code, and nucleosome remodeling. In Oncorhynchus mykiss (Rainbow trout), this protein is Histone H2B.